Here is a 342-residue protein sequence, read N- to C-terminus: UDP-N-acetylenolpyruvoylglucosamine reductase (342 aa).

In terms of domain architecture, FAD-binding PCMH-type spans 17–192 (RFEAAARYAA…AEVTFALPVD (176 aa)). Arg-168 is a catalytic residue. Catalysis depends on Ser-242, which acts as the Proton donor. The active site involves Glu-338.

Belongs to the MurB family. Requires FAD as cofactor.

Its subcellular location is the cytoplasm. It carries out the reaction UDP-N-acetyl-alpha-D-muramate + NADP(+) = UDP-N-acetyl-3-O-(1-carboxyvinyl)-alpha-D-glucosamine + NADPH + H(+). Its pathway is cell wall biogenesis; peptidoglycan biosynthesis. Cell wall formation. The polypeptide is UDP-N-acetylenolpyruvoylglucosamine reductase (Ralstonia nicotianae (strain ATCC BAA-1114 / GMI1000) (Ralstonia solanacearum)).